The chain runs to 68 residues: Protein SlyX homolog (68 aa).

Belongs to the SlyX family.

The polypeptide is Protein SlyX homolog (Brucella abortus (strain S19)).